Consider the following 320-residue polypeptide: Malate dehydrogenase (320 aa).

Residues 10–15 (GSGMIG) and Asp-34 contribute to the NAD(+) site. The substrate site is built by Arg-83 and Arg-89. NAD(+)-binding positions include Asn-96 and 119–121 (ITN). Positions 121 and 152 each coordinate substrate. His-176 (proton acceptor) is an active-site residue.

The protein belongs to the LDH/MDH superfamily. MDH type 3 family.

It carries out the reaction (S)-malate + NAD(+) = oxaloacetate + NADH + H(+). In terms of biological role, catalyzes the reversible oxidation of malate to oxaloacetate. The polypeptide is Malate dehydrogenase (Brucella canis (strain ATCC 23365 / NCTC 10854 / RM-666)).